A 259-amino-acid chain; its full sequence is MRVLVSNDDGVDAPGIQILAEALRHGGHEVMVVAPDRDRSGASNSLTLDVPIRTRRIDAQTCAVAGTPTDCVHLALTGMLDCDPDIVVSGINNSANLGDDVIYSGTVSAAMEGRFLGLPAVAVSLVTHNHQAHHYDTAARAAVEIVARLKADPLPADTILNVNVPDLAWSDVLGFEVTRLGNRHRSEPCVPQRDPRGRTVYWIGPAGPEQDAGAGTDFHAVRTGHISITPIHVDLTRYQALETVAGWVGGLTAALDGPA.

Asp-8, Asp-9, Ser-40, and Asn-92 together coordinate a divalent metal cation.

This sequence belongs to the SurE nucleotidase family. A divalent metal cation is required as a cofactor.

The protein resides in the cytoplasm. The catalysed reaction is a ribonucleoside 5'-phosphate + H2O = a ribonucleoside + phosphate. Its function is as follows. Nucleotidase that shows phosphatase activity on nucleoside 5'-monophosphates. This is 5'-nucleotidase SurE from Xanthomonas oryzae pv. oryzae (strain MAFF 311018).